The following is a 712-amino-acid chain: Polyribonucleotide nucleotidyltransferase (712 aa).

Mg(2+) is bound by residues aspartate 485 and aspartate 491. One can recognise a KH domain in the interval proline 552–isoleucine 611. Positions glycine 621–arginine 689 constitute an S1 motif domain.

It belongs to the polyribonucleotide nucleotidyltransferase family. The cofactor is Mg(2+).

The protein localises to the cytoplasm. It catalyses the reaction RNA(n+1) + phosphate = RNA(n) + a ribonucleoside 5'-diphosphate. Its function is as follows. Involved in mRNA degradation. Catalyzes the phosphorolysis of single-stranded polyribonucleotides processively in the 3'- to 5'-direction. In Gluconacetobacter diazotrophicus (strain ATCC 49037 / DSM 5601 / CCUG 37298 / CIP 103539 / LMG 7603 / PAl5), this protein is Polyribonucleotide nucleotidyltransferase.